The chain runs to 169 residues: Centrin-1 (169 aa).

The tract at residues 1–21 is essential for homooligomerization; that stretch reads MHSRKGASSLPRGRGAGKKTE. Residues 1-25 are disordered; it reads MHSRKGASSLPRGRGAGKKTELTEE. EF-hand domains follow at residues 25–60, 61–96, 98–133, and 134–169; these read EQRQ…LGFE, PKKE…KMAE, DPRE…LGEN, and LTDE…TNLF. Positions 38, 40, 42, 44, 49, 74, 76, 78, 80, and 85 each coordinate Ca(2+).

Belongs to the centrin family. Monomer. Homooligomerizes in a Ca(2+)-dependent manner. Interaction via the C-terminus with other proteins disrupts and/or prevents homooligomerization. Interacts with SFI1.

The protein resides in the cytoplasm. It localises to the cytoskeleton. Its subcellular location is the microtubule organizing center. The protein localises to the centrosome. In terms of biological role, acts as a calcium sensor. Part of the centrosome outer core complex. This is Centrin-1 from Toxoplasma gondii (strain ATCC 50611 / Me49).